Here is a 352-residue protein sequence, read N- to C-terminus: Ferrochelatase (352 aa).

The Fe cation site is built by H222 and E303.

Belongs to the ferrochelatase family.

Its subcellular location is the cytoplasm. The catalysed reaction is heme b + 2 H(+) = protoporphyrin IX + Fe(2+). The protein operates within porphyrin-containing compound metabolism; protoheme biosynthesis; protoheme from protoporphyrin-IX: step 1/1. In terms of biological role, catalyzes the ferrous insertion into protoporphyrin IX. The protein is Ferrochelatase of Brucella melitensis biotype 2 (strain ATCC 23457).